The following is a 158-amino-acid chain: Interleukin-17A (158 aa).

The signal sequence occupies residues 1–25; sequence MSPGRASSVSLMLLLLLSLAATVKA. N71 carries an N-linked (GlcNAc...) asparagine glycan. 2 disulfides stabilise this stretch: C97/C147 and C102/C149.

Belongs to the IL-17 family. As to quaternary structure, homodimer. Forms complexes with IL17RA and IL17RC receptors with 2:1 binding stoichiometry: two receptor chains for one interleukin molecule. IL17A homodimer preferentially drives the formation of IL17RA-IL17RC heterodimeric receptor complex. IL17A homodimer adopts an asymmetrical ternary structure with one IL17RA molecule, allowing for high affinity interactions of one IL17A monomer with one IL17RA molecule (via D1 and D2 domains), while disfavoring binding of a second IL17RA molecule on the other IL17A monomer. Heterodimer with IL17F. IL17A-IL17F forms complexes with IL17RA-IL17RC, but with lower affinity when compared to IL17A homodimer. IL17RA and IL17RC chains cannot distinguish between IL17A and IL17F molecules, potentially enabling the formation of topologically distinct complexes. In terms of tissue distribution, expressed by Th17 cell lineage (at protein level). The expression pattern reflects the differentiation state, with IL17A-IL17F heterodimers produced at higher levels than IL17A-IL17A and IL17F-IL17F dimers in fully differentiated Th17 cells. Expressed in innate lymphoid cells (at protein level). Expressed in gamma-delta T cell subsets (at protein level). Expressed in iNKT cells (at protein level).

It localises to the secreted. Effector cytokine of innate and adaptive immune system involved in antimicrobial host defense and maintenance of tissue integrity. Signals via IL17RA-IL17RC heterodimeric receptor complex, triggering homotypic interaction of IL17RA and IL17RC chains with TRAF3IP2 adapter. This leads to downstream TRAF6-mediated activation of NF-kappa-B and MAPkinase pathways ultimately resulting in transcriptional activation of cytokines, chemokines, antimicrobial peptides and matrix metalloproteinases, with potential strong immune inflammation. Plays an important role in connecting T cell-mediated adaptive immunity and acute inflammatory response to destroy extracellular bacteria and fungi. As a signature effector cytokine of T-helper 17 cells (Th17), primarily induces neutrophil activation and recruitment at infection and inflammatory sites. In airway epithelium, mediates neutrophil chemotaxis via induction of CXCL1 and CXCL5 chemokines. In secondary lymphoid organs, contributes to germinal center formation by regulating the chemotactic response of B cells to CXCL12 and CXCL13, enhancing retention of B cells within the germinal centers, B cell somatic hypermutation rate and selection toward plasma cells. Effector cytokine of a subset of gamma-delta T cells that functions as part of an inflammatory circuit downstream IL1B, TLR2 and IL23A-IL12B to promote neutrophil recruitment for efficient bacterial clearance. Effector cytokine of innate immune cells including invariant natural killer cell (iNKT) and group 3 innate lymphoid cells that mediate initial neutrophilic inflammation. Involved in the maintenance of the integrity of epithelial barriers during homeostasis and pathogen infection. Upon acute injury, has a direct role in epithelial barrier formation by regulating OCLN localization and tight junction biogenesis. As part of the mucosal immune response induced by commensal bacteria, enhances host's ability to resist pathogenic bacterial and fungal infections by promoting neutrophil recruitment and antimicrobial peptides release. In synergy with IL17F, mediates the production of antimicrobial beta-defensins DEFB1, DEFB103A, and DEFB104A by mucosal epithelial cells, limiting the entry of microbes through the epithelial barriers. Involved in antiviral host defense through various mechanisms. Enhances immunity against West Nile virus by promoting T cell cytotoxicity. May play a beneficial role in influenza A virus (H5N1) infection by enhancing B cell recruitment and immune response in the lung. Contributes to influenza A virus (H1N1) clearance by driving the differentiation of B-1a B cells, providing for production of virus-specific IgM antibodies at first line of host defense. In Mus musculus (Mouse), this protein is Interleukin-17A (Il17a).